The chain runs to 389 residues: MSGEMFGDEVDIKARLRAAEVMYKKFHRLISDVIKGRPPKLEIPKRTLSNTIFDPERGILVIGEEKLEREFLNVGESRRFMQTLLMASIIYQSLIENEYPTIRDLYYKGKHTIVYRDYSGRKREENTWDEQKESDSVIQDIEVYTGLFREDMLILSKEKGKVVGNMRIRSGGDVIDLSKLGHGAYAIEPTPDLIEFLDVDAEFVLVVEKDAVFQQLHRAGFWKKYKALLVTGSGQPDRATRRFVRRLHEELKLPVYIITDSDPYGWYIYSVYKVGSITLSYESERLATPKAKFLGVQMTDIFGYRGKKPYLSEAERKKFMIKATDKDIKRAKELLNYSWIGKNRRWNVEIRLFLKHLVKLEIEAIASKGLKFFAYQYIPEKIETGDWID.

The region spanning 13–161 is the Topo IIA-type catalytic domain; the sequence is KARLRAAEVM…MLILSKEKGK (149 aa). Tyr107 (O-(5'-phospho-DNA)-tyrosine intermediate) is an active-site residue. Mg(2+)-binding residues include Glu208 and Asp260.

This sequence belongs to the TOP6A family. As to quaternary structure, homodimer. Heterotetramer of two Top6A and two Top6B chains. The cofactor is Mg(2+).

It catalyses the reaction ATP-dependent breakage, passage and rejoining of double-stranded DNA.. Relaxes both positive and negative superturns and exhibits a strong decatenase activity. The sequence is that of Type 2 DNA topoisomerase 6 subunit A from Aeropyrum pernix (strain ATCC 700893 / DSM 11879 / JCM 9820 / NBRC 100138 / K1).